Here is a 192-residue protein sequence, read N- to C-terminus: Large ribosomal subunit protein uL3 (192 aa).

The protein belongs to the universal ribosomal protein uL3 family. Part of the 50S ribosomal subunit. Forms a cluster with proteins L14 and L19.

Functionally, one of the primary rRNA binding proteins, it binds directly near the 3'-end of the 23S rRNA, where it nucleates assembly of the 50S subunit. This chain is Large ribosomal subunit protein uL3 (rplC), found in Wolinella succinogenes (strain ATCC 29543 / DSM 1740 / CCUG 13145 / JCM 31913 / LMG 7466 / NCTC 11488 / FDC 602W) (Vibrio succinogenes).